Consider the following 310-residue polypeptide: Oxygen-dependent coproporphyrinogen-III oxidase (310 aa).

Ser-97 is a binding site for substrate. Residues His-101 and His-111 each contribute to the a divalent metal cation site. His-111 (proton donor) is an active-site residue. 113–115 (NFR) serves as a coordination point for substrate. 2 residues coordinate a divalent metal cation: His-150 and His-180. An important for dimerization region spans residues 245–280 (YVEFNLLYDRGTRFGLEFGGRTESILMSLPPRVVWR). Substrate is bound at residue 263–265 (GGR).

It belongs to the aerobic coproporphyrinogen-III oxidase family. In terms of assembly, homodimer. A divalent metal cation is required as a cofactor.

It localises to the cytoplasm. It catalyses the reaction coproporphyrinogen III + O2 + 2 H(+) = protoporphyrinogen IX + 2 CO2 + 2 H2O. The protein operates within porphyrin-containing compound metabolism; protoporphyrin-IX biosynthesis; protoporphyrinogen-IX from coproporphyrinogen-III (O2 route): step 1/1. Functionally, involved in the heme biosynthesis. Catalyzes the aerobic oxidative decarboxylation of propionate groups of rings A and B of coproporphyrinogen-III to yield the vinyl groups in protoporphyrinogen-IX. The chain is Oxygen-dependent coproporphyrinogen-III oxidase from Coxiella burnetii (strain RSA 493 / Nine Mile phase I).